A 54-amino-acid polypeptide reads, in one-letter code: Ovomucoid (54 aa).

Residues 4 to 54 (VDCSDYPKPVCSLEYMPLCGSDSKTYSNKCDFCNAFVDSNGTLSLSHFGKC) form the Kazal-like domain. Cystine bridges form between Cys-6/Cys-36, Cys-14/Cys-33, and Cys-22/Cys-54. N-linked (GlcNAc...) asparagine glycosylation is present at Asn-43.

The protein localises to the secreted. The polypeptide is Ovomucoid (Circus aeruginosus (Western marsh harrier)).